A 375-amino-acid chain; its full sequence is cAMP-dependent protein kinase regulatory subunit (375 aa).

The segment at 28–142 (RFCADYFNER…SLYKSVSHNF (115 aa)) is dimerization and phosphorylation. Over residues 41 to 50 (REEADDDGPR) the composition is skewed to basic and acidic residues. The tract at residues 41 to 102 (REEADDDGPR…EPAAPFTRRT (62 aa)) is disordered. The segment covering 64–82 (GSSSRSTDGSLFRSSFADT) has biased composition (polar residues). Residues 83–97 (SSEGPGSASSEPAAP) are compositionally biased toward low complexity. Serine 103 is modified (phosphoserine). Residues 143 to 258 (LFGN…FLKE), glutamate 208, arginine 217, 261 to 375 (ILSD…DPTK), glutamate 328, and arginine 337 each bind 3',5'-cyclic AMP.

This sequence belongs to the cAMP-dependent kinase regulatory chain family. In terms of assembly, tetramer, composed of 2 regulatory (R) and 2 catalytic (C) subunits. In the presence of cAMP it dissociates into 2 active monomeric C subunits and an R dimer.

This chain is cAMP-dependent protein kinase regulatory subunit (PKAR), found in Yarrowia lipolytica (strain CLIB 122 / E 150) (Yeast).